We begin with the raw amino-acid sequence, 73 residues long: Toxin Td12 (73 aa).

The signal sequence occupies residues 1–7; it reads IGMVIEC. An LCN-type CS-alpha/beta domain is found at 8-70; the sequence is KDGYLMEPNG…TWDRATNTCG (63 aa). Cystine bridges form between C18/C69, C22/C44, C30/C50, and C34/C52. Arginine amide is present on R71.

This sequence belongs to the long (4 C-C) scorpion toxin superfamily. Sodium channel inhibitor family. Beta subfamily. In terms of tissue distribution, expressed by the venom gland.

Its subcellular location is the secreted. Beta toxins bind voltage-independently at site-4 of sodium channels (Nav) and shift the voltage of activation toward more negative potentials thereby affecting sodium channel activation and promoting spontaneous and repetitive firing. In Tityus discrepans (Venezuelan scorpion), this protein is Toxin Td12.